We begin with the raw amino-acid sequence, 136 residues long: Polyadenylate-binding protein-interacting protein 2B (136 aa).

Over residues 15–25 the composition is skewed to polar residues; that stretch reads NGSSVASTSPS. 2 disordered regions span residues 15–40 and 107–136; these read NGSSVASTSPSVKCKEDQGLNGHEEK and SVGDSHESEDILSKSNLNPDAKEFVPGVKY. Residues 27–40 show a composition bias toward basic and acidic residues; sequence KCKEDQGLNGHEEK.

It belongs to the PAIP2 family. As to quaternary structure, interacts (via central acidic portion and C-terminus) with PABPC1 (via the second and third RRM domains and the C-terminus). In terms of processing, ubiquitinated in vitro. In terms of tissue distribution, expressed at very high levels in pancreas, at high levels in testis and at moderately high levels in brain, heart and lung (at protein level).

Its function is as follows. Inhibits translation of capped and polyadenylated mRNAs by displacing PABPC1 from the poly(A) tail. This Mus musculus (Mouse) protein is Polyadenylate-binding protein-interacting protein 2B (Paip2b).